The primary structure comprises 74 residues: Small ribosomal subunit protein bS18 (74 aa).

The protein belongs to the bacterial ribosomal protein bS18 family. Part of the 30S ribosomal subunit. Forms a tight heterodimer with protein bS6.

Its function is as follows. Binds as a heterodimer with protein bS6 to the central domain of the 16S rRNA, where it helps stabilize the platform of the 30S subunit. The chain is Small ribosomal subunit protein bS18 from Zymomonas mobilis subsp. mobilis (strain ATCC 31821 / ZM4 / CP4).